Consider the following 100-residue polypeptide: Small ribosomal subunit protein uS14c (100 aa).

This sequence belongs to the universal ribosomal protein uS14 family. In terms of assembly, part of the 30S ribosomal subunit.

The protein localises to the plastid. It is found in the chloroplast. Functionally, binds 16S rRNA, required for the assembly of 30S particles. The sequence is that of Small ribosomal subunit protein uS14c from Ostreococcus tauri.